A 122-amino-acid polypeptide reads, in one-letter code: Large ribosomal subunit protein uL14 (122 aa).

It belongs to the universal ribosomal protein uL14 family. In terms of assembly, part of the 50S ribosomal subunit. Forms a cluster with proteins L3 and L19. In the 70S ribosome, L14 and L19 interact and together make contacts with the 16S rRNA in bridges B5 and B8.

Binds to 23S rRNA. Forms part of two intersubunit bridges in the 70S ribosome. The polypeptide is Large ribosomal subunit protein uL14 (Rhodospirillum rubrum (strain ATCC 11170 / ATH 1.1.1 / DSM 467 / LMG 4362 / NCIMB 8255 / S1)).